Reading from the N-terminus, the 170-residue chain is Peptide deformylase (170 aa).

Fe cation is bound by residues cysteine 94 and histidine 136. Glutamate 137 is a catalytic residue. Residue histidine 140 coordinates Fe cation.

Belongs to the polypeptide deformylase family. Requires Fe(2+) as cofactor.

The catalysed reaction is N-terminal N-formyl-L-methionyl-[peptide] + H2O = N-terminal L-methionyl-[peptide] + formate. Removes the formyl group from the N-terminal Met of newly synthesized proteins. Requires at least a dipeptide for an efficient rate of reaction. N-terminal L-methionine is a prerequisite for activity but the enzyme has broad specificity at other positions. This Wolinella succinogenes (strain ATCC 29543 / DSM 1740 / CCUG 13145 / JCM 31913 / LMG 7466 / NCTC 11488 / FDC 602W) (Vibrio succinogenes) protein is Peptide deformylase.